Here is a 336-residue protein sequence, read N- to C-terminus: CENP-A histone chaperone scm3 (336 aa).

The disordered stretch occupies residues 243–269 (RRRNPLLSSPKTPLRRSFSKSKVRNSN). Positions 255-269 (PLRRSFSKSKVRNSN) are enriched in basic residues.

Its subcellular location is the cytoplasm. It localises to the nucleus. In terms of biological role, centromeric protein that plays a central role in the incorporation and maintenance of histone H3-like variant CENPA at centromeres. This chain is CENP-A histone chaperone scm3, found in Schizosaccharomyces pombe (strain 972 / ATCC 24843) (Fission yeast).